Here is a 210-residue protein sequence, read N- to C-terminus: Chaperone protein TorD (210 aa).

It belongs to the TorD/DmsD family. TorD subfamily.

It localises to the cytoplasm. Functionally, involved in the biogenesis of TorA. Acts on TorA before the insertion of the molybdenum cofactor and, as a result, probably favors a conformation of the apoenzyme that is competent for acquiring the cofactor. This Salmonella choleraesuis (strain SC-B67) protein is Chaperone protein TorD.